The following is a 381-amino-acid chain: Curved DNA-binding protein (381 aa).

Residue S8 is modified to Phosphoserine. T362 is subject to Phosphothreonine. A Nuclear localization signal motif is present at residues 368–375; it reads KNKKKSKK.

Belongs to the peptidase M24 family.

The protein localises to the nucleus. In terms of biological role, a non-essential protein that preferentially binds curved DNA. Binds non-curved DNA with a much lower affinity. The protein is Curved DNA-binding protein (cdb4) of Schizosaccharomyces pombe (strain 972 / ATCC 24843) (Fission yeast).